The chain runs to 37 residues: Large ribosomal subunit protein bL36 (37 aa).

This sequence belongs to the bacterial ribosomal protein bL36 family.

The chain is Large ribosomal subunit protein bL36 from Thermosynechococcus vestitus (strain NIES-2133 / IAM M-273 / BP-1).